A 403-amino-acid chain; its full sequence is PP2A regulatory subunit TAP46 (403 aa).

Disordered regions lie at residues 158–184 (ERRGRSTKAAALSSPVETEEDDVLDDD) and 351–403 (ANSS…TPCG). Composition is skewed to acidic residues over residues 174–184 (ETEEDDVLDDD) and 366–375 (EDDEEDDDDA). Residues 376–391 (AQDKARAWDDWKDDNP) show a composition bias toward basic and acidic residues.

This sequence belongs to the IGBP1/TAP42 family.

In terms of biological role, involved in the regulation of the TOR signaling pathway. Seems to act as a regulator of PP2A catalytic activity. The sequence is that of PP2A regulatory subunit TAP46 from Nicotiana tabacum (Common tobacco).